A 278-amino-acid polypeptide reads, in one-letter code: 2,5-diketo-D-gluconic acid reductase A (278 aa).

Catalysis depends on Tyr50, which acts as the Proton donor. His108 contributes to the substrate binding site. 188–242 (GPLGQGKYDLFGAEPVTAAAAAHGKTPAQAVLRWHLQKGFVVFPKSVRRERLEEN) is an NADP(+) binding site. The disordered stretch occupies residues 259–278 (DAMDPGDGSGRVSAHPDEVD).

Belongs to the aldo/keto reductase family. Monomer.

The protein localises to the cytoplasm. It carries out the reaction 2-dehydro-L-idonate + NADP(+) = 2,5-didehydro-D-gluconate + NADPH + H(+). With respect to regulation, inhibited by Zn(2+), Fe(3+), Cu(2+) and Ni(2+). Its function is as follows. Catalyzes the reduction of 2,5-diketo-D-gluconic acid (25DKG) to 2-keto-L-gulonic acid (2KLG). 5-keto-D-fructose and dihydroxyacetone can also serve as substrates. 25DKGR-A exhibits a greater selectivity for the substrate and higher thermal stability than 25DKGR-B. The sequence is that of 2,5-diketo-D-gluconic acid reductase A (dkgA) from Corynebacterium sp. (strain ATCC 31090).